Here is a 180-residue protein sequence, read N- to C-terminus: NADH-quinone oxidoreductase subunit I (180 aa).

4Fe-4S ferredoxin-type domains follow at residues leucine 50–serine 80 and lysine 90–aspartate 119. Residues cysteine 60, cysteine 63, cysteine 66, cysteine 70, cysteine 99, cysteine 102, cysteine 105, and cysteine 109 each contribute to the [4Fe-4S] cluster site.

It belongs to the complex I 23 kDa subunit family. As to quaternary structure, NDH-1 is composed of 13 different subunits. Subunits NuoA, H, J, K, L, M, N constitute the membrane sector of the complex. The cofactor is [4Fe-4S] cluster.

The protein localises to the cell membrane. The enzyme catalyses a quinone + NADH + 5 H(+)(in) = a quinol + NAD(+) + 4 H(+)(out). Its function is as follows. NDH-1 shuttles electrons from NADH, via FMN and iron-sulfur (Fe-S) centers, to quinones in the respiratory chain. The immediate electron acceptor for the enzyme in this species is believed to be ubiquinone. Couples the redox reaction to proton translocation (for every two electrons transferred, four hydrogen ions are translocated across the cytoplasmic membrane), and thus conserves the redox energy in a proton gradient. The polypeptide is NADH-quinone oxidoreductase subunit I (Buchnera aphidicola subsp. Acyrthosiphon pisum (strain APS) (Acyrthosiphon pisum symbiotic bacterium)).